A 129-amino-acid polypeptide reads, in one-letter code: Copper chaperone GriE (129 aa).

Positions 1-37 form a signal peptide, tat-type signal; it reads MPMNRREMVMATTGAALAAAAAVPLLSGGEGEGAAEA. The segment at 32 to 51 is disordered; it reads EGAAEAAAAPAKATGRGREH. The span at 34 to 45 shows a compositional bias: low complexity; sequence AAEAAAAPAKAT.

The protein belongs to the melC1 family. In terms of processing, predicted to be exported by the Tat system. The position of the signal peptide cleavage has not been experimentally proven.

Its function is as follows. Involved in the transfer of Cu(2+) ions to the apo form of o-aminophenol oxidase GriF in the grixazone biosynthetic pathway. The chain is Copper chaperone GriE (griE) from Streptomyces griseus subsp. griseus (strain JCM 4626 / CBS 651.72 / NBRC 13350 / KCC S-0626 / ISP 5235).